We begin with the raw amino-acid sequence, 344 residues long: MTAILERRETTSLWARFCEWVTSTENRLYIGWFGCLMIPTLLTATSVFIIAFIAAPPVDIDGIREPVSGSLLYGNNIISGAVVPTSNAIGLHFYPIWEAASLDEWLYNGGPYQLIVCHFFLGICAYMGREWELSFRLGMRPWIAVAYSAPVAAATAVFIIYPIGQGSFSDGMPLGISGTFNFMIVFQAEHNILMHPFHMLGVAGVFGGSLFSAMHGSLVTSSLIRETTENQSANAGYRFGQEEETYNIVAAHGYFGRLIFQYASFNNSRSLHFFLAAWPVIGIWFTALGISTMAFNLNGFNFNQSVLDSQGRVLNTWADIINRANLGMEVMHERNAHNFPLDLA.

An N-acetylthreonine modification is found at Thr2. The residue at position 2 (Thr2) is a Phosphothreonine. The next 3 membrane-spanning stretches (helical) occupy residues 29–46, 118–133, and 142–156; these read YIGW…TATS, HFFL…EWEL, and WIAV…AATA. Position 118 (His118) interacts with chlorophyll a. Tyr126 is a pheophytin a binding site. 2 residues coordinate [CaMn4O5] cluster: Asp170 and Glu189. The chain crosses the membrane as a helical span at residues 197–218; that stretch reads FHMLGVAGVFGGSLFSAMHGSL. His198 contacts chlorophyll a. A quinone-binding positions include His215 and 264–265; that span reads SF. His215 is a binding site for Fe cation. Residue His272 participates in Fe cation binding. A helical transmembrane segment spans residues 274-288; that stretch reads FLAAWPVIGIWFTAL. 4 residues coordinate [CaMn4O5] cluster: His332, Glu333, Asp342, and Ala344.

This sequence belongs to the reaction center PufL/M/PsbA/D family. In terms of assembly, PSII is composed of 1 copy each of membrane proteins PsbA, PsbB, PsbC, PsbD, PsbE, PsbF, PsbH, PsbI, PsbJ, PsbK, PsbL, PsbM, PsbT, PsbX, PsbY, PsbZ, Psb30/Ycf12, at least 3 peripheral proteins of the oxygen-evolving complex and a large number of cofactors. It forms dimeric complexes. The D1/D2 heterodimer binds P680, chlorophylls that are the primary electron donor of PSII, and subsequent electron acceptors. It shares a non-heme iron and each subunit binds pheophytin, quinone, additional chlorophylls, carotenoids and lipids. D1 provides most of the ligands for the Mn4-Ca-O5 cluster of the oxygen-evolving complex (OEC). There is also a Cl(-1) ion associated with D1 and D2, which is required for oxygen evolution. The PSII complex binds additional chlorophylls, carotenoids and specific lipids. is required as a cofactor. In terms of processing, tyr-161 forms a radical intermediate that is referred to as redox-active TyrZ, YZ or Y-Z.

Its subcellular location is the plastid. It localises to the chloroplast thylakoid membrane. It catalyses the reaction 2 a plastoquinone + 4 hnu + 2 H2O = 2 a plastoquinol + O2. Photosystem II (PSII) is a light-driven water:plastoquinone oxidoreductase that uses light energy to abstract electrons from H(2)O, generating O(2) and a proton gradient subsequently used for ATP formation. It consists of a core antenna complex that captures photons, and an electron transfer chain that converts photonic excitation into a charge separation. The D1/D2 (PsbA/PsbD) reaction center heterodimer binds P680, the primary electron donor of PSII as well as several subsequent electron acceptors. The polypeptide is Photosystem II protein D1 (Pleurastrum terricola (Filamentous green alga)).